The sequence spans 236 residues: MSCRAMVSPPSRTARAGAVLASSPFVTSQPTEELLREFETVYGAVELTHLTPPQSPPGPATQLLLSYAQQAQCTALAPPAPLAPPQEAWQIVAPVPVNQLPEGYECDLDAVEELVRHRASQLASPQHSSSSANASPRSSPPPSPRSSSTDEDWSAPSRLKTRPVDDRRSRKKEQNKNAATRYRQKKKAEVEVLLKEEQTLRQRHTELGEKCSDLQREIRYLKALMRDLFKAKGLIK.

A disordered region spans residues 117-185; that stretch reads HRASQLASPQ…KNAATRYRQK (69 aa). Residues 120 to 137 are compositionally biased toward low complexity; sequence SQLASPQHSSSSANASPR. Basic and acidic residues predominate over residues 162–175; sequence RPVDDRRSRKKEQN. In terms of domain architecture, bZIP spans 165–228; the sequence is DDRRSRKKEQ…RYLKALMRDL (64 aa). The basic motif stretch occupies residues 167-187; the sequence is RRSRKKEQNKNAATRYRQKKK. The interval 193-228 is leucine-zipper; that stretch reads LLKEEQTLRQRHTELGEKCSDLQREIRYLKALMRDL.

This sequence belongs to the bZIP family. In terms of assembly, binds DNA as a dimer.

It localises to the nucleus. Functionally, transcriptional activator that acts in the unfolded protein response (UPR) pathway. Acts during endoplasmic reticulum (ER) stress by activating UPR target genes via direct binding to the UPR element (UPRE) (5'-GGAACTGGACAGCGTGTCGAAA-3'). Activates expression of ER chaperones ERP72 and PDI. The chain is Activating transcription factor of chaperone from Bombyx mori (Silk moth).